We begin with the raw amino-acid sequence, 270 residues long: Bis(5'-nucleosyl)-tetraphosphatase, symmetrical (270 aa).

The protein belongs to the Ap4A hydrolase family.

It catalyses the reaction P(1),P(4)-bis(5'-adenosyl) tetraphosphate + H2O = 2 ADP + 2 H(+). Hydrolyzes diadenosine 5',5'''-P1,P4-tetraphosphate to yield ADP. The chain is Bis(5'-nucleosyl)-tetraphosphatase, symmetrical from Actinobacillus pleuropneumoniae serotype 5b (strain L20).